We begin with the raw amino-acid sequence, 241 residues long: Octanoyltransferase (241 aa).

The BPL/LPL catalytic domain maps to 49-233; the sequence is GEASELVWLL…AFGEVFGPSE (185 aa). Substrate is bound by residues 87 to 94, 162 to 164, and 175 to 177; these read RGGQVTYH, AIG, and GIS. C193 acts as the Acyl-thioester intermediate in catalysis.

The protein belongs to the LipB family.

The protein localises to the cytoplasm. It catalyses the reaction octanoyl-[ACP] + L-lysyl-[protein] = N(6)-octanoyl-L-lysyl-[protein] + holo-[ACP] + H(+). It participates in protein modification; protein lipoylation via endogenous pathway; protein N(6)-(lipoyl)lysine from octanoyl-[acyl-carrier-protein]: step 1/2. Its function is as follows. Catalyzes the transfer of endogenously produced octanoic acid from octanoyl-acyl-carrier-protein onto the lipoyl domains of lipoate-dependent enzymes. Lipoyl-ACP can also act as a substrate although octanoyl-ACP is likely to be the physiological substrate. The chain is Octanoyltransferase from Nitrobacter hamburgensis (strain DSM 10229 / NCIMB 13809 / X14).